The sequence spans 234 residues: Phosphoribosylformylglycinamidine synthase subunit PurQ (234 aa).

Positions 3-231 (AAVVVFPGSN…ALYLERRKDH (229 aa)) constitute a Glutamine amidotransferase type-1 domain. Cys87 (nucleophile) is an active-site residue. Catalysis depends on residues His200 and Glu202.

Part of the FGAM synthase complex composed of 1 PurL, 1 PurQ and 2 PurS subunits.

It is found in the cytoplasm. It catalyses the reaction N(2)-formyl-N(1)-(5-phospho-beta-D-ribosyl)glycinamide + L-glutamine + ATP + H2O = 2-formamido-N(1)-(5-O-phospho-beta-D-ribosyl)acetamidine + L-glutamate + ADP + phosphate + H(+). The catalysed reaction is L-glutamine + H2O = L-glutamate + NH4(+). It participates in purine metabolism; IMP biosynthesis via de novo pathway; 5-amino-1-(5-phospho-D-ribosyl)imidazole from N(2)-formyl-N(1)-(5-phospho-D-ribosyl)glycinamide: step 1/2. Its function is as follows. Part of the phosphoribosylformylglycinamidine synthase complex involved in the purines biosynthetic pathway. Catalyzes the ATP-dependent conversion of formylglycinamide ribonucleotide (FGAR) and glutamine to yield formylglycinamidine ribonucleotide (FGAM) and glutamate. The FGAM synthase complex is composed of three subunits. PurQ produces an ammonia molecule by converting glutamine to glutamate. PurL transfers the ammonia molecule to FGAR to form FGAM in an ATP-dependent manner. PurS interacts with PurQ and PurL and is thought to assist in the transfer of the ammonia molecule from PurQ to PurL. The sequence is that of Phosphoribosylformylglycinamidine synthase subunit PurQ from Pseudothermotoga lettingae (strain ATCC BAA-301 / DSM 14385 / NBRC 107922 / TMO) (Thermotoga lettingae).